The sequence spans 69 residues: DNA-directed RNA polymerase subunit omega (69 aa).

It belongs to the RNA polymerase subunit omega family. In terms of assembly, the RNAP catalytic core consists of 2 alpha, 1 beta, 1 beta' and 1 omega subunit. When a sigma factor is associated with the core the holoenzyme is formed, which can initiate transcription.

It carries out the reaction RNA(n) + a ribonucleoside 5'-triphosphate = RNA(n+1) + diphosphate. Promotes RNA polymerase assembly. Latches the N- and C-terminal regions of the beta' subunit thereby facilitating its interaction with the beta and alpha subunits. The polypeptide is DNA-directed RNA polymerase subunit omega (Carboxydothermus hydrogenoformans (strain ATCC BAA-161 / DSM 6008 / Z-2901)).